A 63-amino-acid chain; its full sequence is MIVDKRHCLQAVQNYIVQINVTRTTKKRSLCCFFSTKISLFIILHLCLLVCLLLSFYFDFYPF.

Residues 38 to 58 (ISLFIILHLCLLVCLLLSFYF) form a helical membrane-spanning segment.

It localises to the membrane. This is an uncharacterized protein from Saccharomyces cerevisiae (strain ATCC 204508 / S288c) (Baker's yeast).